The following is a 141-amino-acid chain: Aspartate 1-decarboxylase (141 aa).

The active-site Schiff-base intermediate with substrate; via pyruvic acid is the serine 25. Serine 25 is subject to Pyruvic acid (Ser). Residue threonine 57 participates in substrate binding. The Proton donor role is filled by tyrosine 58. Residue 73 to 75 (GAA) participates in substrate binding. The interval 121–141 (ASAPVPGSRTERSPQAVVAGG) is disordered.

The protein belongs to the PanD family. In terms of assembly, heterooctamer of four alpha and four beta subunits. Requires pyruvate as cofactor. Post-translationally, is synthesized initially as an inactive proenzyme, which is activated by self-cleavage at a specific serine bond to produce a beta-subunit with a hydroxyl group at its C-terminus and an alpha-subunit with a pyruvoyl group at its N-terminus.

Its subcellular location is the cytoplasm. It catalyses the reaction L-aspartate + H(+) = beta-alanine + CO2. It functions in the pathway cofactor biosynthesis; (R)-pantothenate biosynthesis; beta-alanine from L-aspartate: step 1/1. In terms of biological role, catalyzes the pyruvoyl-dependent decarboxylation of aspartate to produce beta-alanine. The polypeptide is Aspartate 1-decarboxylase (Streptomyces griseus subsp. griseus (strain JCM 4626 / CBS 651.72 / NBRC 13350 / KCC S-0626 / ISP 5235)).